The following is a 72-amino-acid chain: Translation initiation factor IF-1 (72 aa).

Residues M1–K72 enclose the S1-like domain.

Belongs to the IF-1 family. In terms of assembly, component of the 30S ribosomal translation pre-initiation complex which assembles on the 30S ribosome in the order IF-2 and IF-3, IF-1 and N-formylmethionyl-tRNA(fMet); mRNA recruitment can occur at any time during PIC assembly.

Its subcellular location is the cytoplasm. Functionally, one of the essential components for the initiation of protein synthesis. Stabilizes the binding of IF-2 and IF-3 on the 30S subunit to which N-formylmethionyl-tRNA(fMet) subsequently binds. Helps modulate mRNA selection, yielding the 30S pre-initiation complex (PIC). Upon addition of the 50S ribosomal subunit IF-1, IF-2 and IF-3 are released leaving the mature 70S translation initiation complex. The polypeptide is Translation initiation factor IF-1 (Chlorobium phaeovibrioides (strain DSM 265 / 1930) (Prosthecochloris vibrioformis (strain DSM 265))).